The chain runs to 1207 residues: MALKMVKGSIDRMFDKNLQDLVRGIRNHKEDEAKYISQCIDEIKQELKQDNIAVKANAVCKLTYLQMLGYDISWAAFNIIEVMSASKFTFKRIGYLAASQCFHEGTDVIMLTTNQIRKDLSSPSQYDTGVALTGLSCFVTPDLARDLANDIMTLMSHTKPYIRKKAVLIMYKVFLKYPESLRPAFPRLKEKLEDPDPGVQSAAVNVICELARRNPKNYLSLAPLFFKLMTSSTNNWVLIKIIKLFGALTPLEPRLGKKLIEPLTNLIHSTSAMSLLYECVNTVIAVLISLSSGMPNHSASIQLCVQKLRILIEDSDQNLKYLGLLAMSKILRTHPKSVQAHKDLVLQCLDDKDESIRLRALDLLYGMVSKKNLMEIVKKLMTHVDKAEGTTYRDELLTKIIDICSQSNYQHITNFEWYISILVELTRLEGTRHGHLIAAQMLDVAIRVKAIRRFAVAQMSALLDSAHLVASSPQRSGICEVLYAAAWICGEFSEHLQEPQQTLEAMLRPKVTTLPGHIQAVYVQNVVKLYAAILQQKEQAADTSAAQEVTQLLVERLPQFVQSADLEVQERASCILQLVKHVQKLQAKDVPVAEEVSALFAGELNPVAPKAQKKVPVPEGLDLDAWINEPLSDSESEDEKPKAMFQDEEQRHTKPRAPEADEQELARRREARRQEQANNPFYIKSSPSPQKRYQDAPGVEHIPVVQIDLSVPLKVPGMPLSDQYVKLEEERRHRQRLEKDKRKKKKRERERRGTRRHSSLHTESDEDIAPAQRVDIVTEEMPENALPSDEDDKDPNDPYRALDIDLDKPLADSEKLPVQKHRNAETSKSPEKEDVPLVEKKSKKPKKKEKKHKEKEREKKKKEVEKGEDLDFWLSTTPPAATPALEELEVNTTVTVLKEGQEEPRGEEQDAEEDREQDLEKKPSKHKKKKHKKDKEERPKDKRKSKKKVPPADEEAAEPVENGTLEEEPLPPMSSYILLAENSYIKMTYDVQGSLQKDSQVTVSVVLENQSDSFLKSMELNVLDSLNARLARPEGSSVHDGVPVPFQLPPGISNEAQFVFTIQSIVMAQKLKGTLSFIAKNDEGSTHEKLDFKLHFTCTSYLVTTPCYSDAFAKLLESGDLSMSSIKVDGISMSFHNLLAKICFHHRFSVVERVDSCASMYSRSIQGHHVCLLVKKGEKSVSVDGKCSDPTLLSNLLEEMKETLATC.

Ala2 is modified (N-acetylalanine). HEAT repeat units follow at residues 34–71, 142–179, 180–216, 218–254, 257–296, 298–336, 337–373, 375–409, and 521–558; these read KYIS…LGYD, DLAR…KYPE, SLRP…RNPK, YLSL…LEPR, KKLI…GMPN, SASI…THPK, SVQA…KKNL, EIVK…QSNY, and VYVQ…ERLP. 2 disordered regions span residues 630-695 and 731-970; these read PLSD…RYQD and RRHR…EEPL. Residues Ser632, Ser634, and Ser636 each carry the phosphoserine modification. The segment covering 648–675 has biased composition (basic and acidic residues); that stretch reads EEQRHTKPRAPEADEQELARRREARRQE. Residues 659-679 are a coiled coil; that stretch reads EADEQELARRREARRQEQANN. Ser688 bears the Phosphoserine mark. Residues 725–752 are a coiled coil; that stretch reads VKLEEERRHRQRLEKDKRKKKKRERERR. A compositionally biased stretch (basic and acidic residues) spans 731–740; sequence RRHRQRLEKD. The segment covering 741 to 759 has biased composition (basic residues); sequence KRKKKKRERERRGTRRHSS. Phosphoserine is present on residues Ser758 and Ser759. Thr762 bears the Phosphothreonine mark. 3 positions are modified to phosphoserine: Ser764, Ser788, and Ser829. The segment covering 777–794 has biased composition (acidic residues); sequence VTEEMPENALPSDEDDKD. The segment covering 795–840 has biased composition (basic and acidic residues); it reads PNDPYRALDIDLDKPLADSEKLPVQKHRNAETSKSPEKEDVPLVEK. The span at 841–854 shows a compositional bias: basic residues; that stretch reads KSKKPKKKEKKHKE. Residues 846 to 870 adopt a coiled-coil conformation; it reads KKKEKKHKEKEREKKKKEVEKGEDL. Basic and acidic residues-rich tracts occupy residues 855-869 and 899-908; these read KERE…KGED and EGQEEPRGEE. Residues 923–933 show a composition bias toward basic residues; sequence PSKHKKKKHKK. Acidic residues predominate over residues 952–969; it reads ADEEAAEPVENGTLEEEP.

The protein belongs to the adaptor complexes large subunit family. AP-3 associates with the BLOC-1 complex. Adaptor protein complex 3 (AP-3) is a heterotetramer composed of two large adaptins (delta-type subunit AP3D1 and beta-type subunit AP3B1 or AP3B2), a medium adaptin (mu-type subunit AP3M1 or AP3M2) and a small adaptin (sigma-type subunit APS1 or AP3S2). Interacts with SLC30A2. Interacts with CLN3 (via dileucine motif); this interaction facilitates lysosomal targeting.

The protein localises to the cytoplasm. It localises to the golgi apparatus membrane. Its function is as follows. Part of the AP-3 complex, an adaptor-related complex which is not clathrin-associated. The complex is associated with the Golgi region as well as more peripheral structures. It facilitates the budding of vesicles from the Golgi membrane and may be directly involved in trafficking to lysosomes. Involved in process of CD8+ T-cell and NK cell degranulation. In concert with the BLOC-1 complex, AP-3 is required to target cargos into vesicles assembled at cell bodies for delivery into neurites and nerve terminals. This is AP-3 complex subunit delta-1 (AP3D1) from Bos taurus (Bovine).